Reading from the N-terminus, the 355-residue chain is Zinc transporter ZIP13 homolog (355 aa).

Asn4 is a glycosylation site (N-linked (GlcNAc...) asparagine). The next 3 helical transmembrane spans lie at 37-57 (VFSLLGSVVIGLSGIFPLIII), 79-99 (VLLSFAVGGLLGDVFLHLLPE), and 118-138 (LWVLSGILIFTIVEKIFSGYA). Asn218 is a glycosylation site (N-linked (GlcNAc...) asparagine). 2 helical membrane passes run 273–293 (LLTAGAGLLGALVAIGGSGVT) and 301–321 (SWIMPFTAGGFLHIALVTVLP).

This sequence belongs to the ZIP transporter (TC 2.A.5) family. KE4/Catsup subfamily.

The protein localises to the basolateral cell membrane. Its subcellular location is the golgi apparatus membrane. Its function is as follows. Involved in zinc transport and homeostasis. In Drosophila melanogaster (Fruit fly), this protein is Zinc transporter ZIP13 homolog (Zip99C).